The sequence spans 494 residues: Transcription termination factor MTERF4, chloroplastic (494 aa).

The N-terminal 54 residues, 1–54 (MMKSLLFSAHPTSLLLPAPRLRRLLRLRAASSASASAPPRADRRSPGTPSRRPS), are a transit peptide targeting the chloroplast. Disordered regions lie at residues 32 to 61 (SASA…YARP) and 457 to 494 (VEEM…EFVR). Residues 46-56 (PGTPSRRPSSS) show a composition bias toward low complexity. 2 stretches are compositionally biased toward acidic residues: residues 457–466 (VEEMEREDSS) and 473–494 (DEVE…EFVR).

This sequence belongs to the mTERF family.

The protein resides in the plastid. Its subcellular location is the chloroplast stroma. Its function is as follows. Transcription termination factor required for processing and steady-state levels of plastid transcripts. Required for splicing of the chloroplastic group II intron. Required for the accumulation of 16S and 23S ribosomes. The polypeptide is Transcription termination factor MTERF4, chloroplastic (Zea mays (Maize)).